Consider the following 855-residue polypeptide: MGSDRARKGGGGPKDFGAGLKYNSRHEKVNGLEEGVEFLPVNNVKKVEKHGPGRWVVLAAVLIGLLLVLLGIGFLVWHLQYRDVRVQKVFNGYMRITNENFVDAYENSNSTEFVSLASKVKDALKLLYSGVPFLGPYHKESAVTAFSEGSVIAYYWSEFSIPQHLVEEAERVMAEERVVMLPPRARSLKSFVVTSVVAFPTDSKTVQRTQDNSCSFGLHARGVELMRFTTPGFPDSPYPAHARCQWALRGDADSVLSLTFRSFDLASCDERGSDLVTVYNTLSPMEPHALVQLCGTYPPSYNLTFHSSQNVLLITLITNTERRHPGFEATFFQLPRMSSCGGRLRKAQGTFNSPYYPGHYPPNIDCTWNIEVPNNQHVKVRFKFFYLLEPGVPAGTCPKDYVEINGEKYCGERSQFVVTSNSNKITVRFHSDQSYTDTGFLAEYLSYDSSDPCPGQFTCRTGRCIRKELRCDGWADCTDHSDELNCSCDAGHQFTCKNKFCKPLFWVCDSVNDCGDNSDEQGCSCPAQTFRCSNGKCLSKSQQCNGKDDCGDGSDEASCPKVNVVTCTKHTYRCLNGLCLSKGNPECDGKEDCSDGSDEKDCDCGLRSFTRQARVVGGTDADEGEWPWQVSLHALGQGHICGASLISPNWLVSAAHCYIDDRGFRYSDPTQWTAFLGLHDQSQRSAPGVQERRLKRIISHPFFNDFTFDYDIALLELEKPAEYSSMVRPICLPDASHVFPAGKAIWVTGWGHTQYGGTGALILQKGEIRVINQTTCENLLPQQITPRMMCVGFLSGGVDSCQGDSGGPLSSVEADGRIFQAGVVSWGDGCAQRNKPGVYTRLPLFRDWIKENTGV.

The disordered stretch occupies residues 1–20 (MGSDRARKGGGGPKDFGAGL). Over 1–55 (MGSDRARKGGGGPKDFGAGLKYNSRHEKVNGLEEGVEFLPVNNVKKVEKHGPGRW) the chain is Cytoplasmic. Residues 56–76 (VVLAAVLIGLLLVLLGIGFLV) traverse the membrane as a helical; Signal-anchor for type II membrane protein segment. Residues 77-855 (WHLQYRDVRV…RDWIKENTGV (779 aa)) lie on the Extracellular side of the membrane. An SEA domain is found at 86–203 (VQKVFNGYMR…TSVVAFPTDS (118 aa)). A glycan (N-linked (GlcNAc...) asparagine) is linked at asparagine 109. An intrachain disulfide couples cysteine 214 to cysteine 244. CUB domains follow at residues 214–334 (CSFG…FFQL) and 340–447 (CGGR…YLSY). Residue asparagine 302 is glycosylated (N-linked (GlcNAc...) asparagine). Disulfide bonds link cysteine 340–cysteine 366, cysteine 397–cysteine 410, cysteine 453–cysteine 464, cysteine 459–cysteine 477, cysteine 471–cysteine 486, cysteine 488–cysteine 501, cysteine 496–cysteine 514, cysteine 508–cysteine 523, cysteine 525–cysteine 537, cysteine 532–cysteine 550, cysteine 544–cysteine 559, cysteine 567–cysteine 579, cysteine 574–cysteine 593, cysteine 587–cysteine 602, and cysteine 641–cysteine 657. 4 LDL-receptor class A domains span residues 452–487 (PCPG…LNCS), 487–524 (SCDA…QGCS), 524–560 (SCPA…ASCP), and 566–603 (TCTK…KDCD). Asparagine 485 carries N-linked (GlcNAc...) asparagine glycosylation. The region spanning 615-854 (VVGGTDADEG…FRDWIKENTG (240 aa)) is the Peptidase S1 domain. Catalysis depends on charge relay system residues histidine 656 and aspartate 711. N-linked (GlcNAc...) asparagine glycosylation occurs at asparagine 772. 2 disulfide bridges follow: cysteine 776–cysteine 790 and cysteine 801–cysteine 830. The Charge relay system role is filled by serine 805.

It belongs to the peptidase S1 family. As to quaternary structure, interacts with CDCP1. May interact with TMEFF1. Interacts with iripin-3, a serine protease inhibitor from Ixodes ricinus saliva. Interacts with iripin-1, a serine protease inhibitor from Ixodes ricinus saliva.

It is found in the membrane. It catalyses the reaction Cleaves various synthetic substrates with Arg or Lys at the P1 position and prefers small side-chain amino acids, such as Ala and Gly, at the P2 position.. Exhibits trypsin-like activity as defined by cleavage of synthetic substrates with Arg or Lys as the P1 site. Involved in the terminal differentiation of keratinocytes through prostasin (PRSS8) activation and filaggrin (FLG) processing. Proteolytically cleaves and therefore activates TMPRSS13. In Homo sapiens (Human), this protein is Suppressor of tumorigenicity 14 protein (ST14).